Reading from the N-terminus, the 149-residue chain is D-aminoacyl-tRNA deacylase (149 aa).

The short motif at Gly-137–Pro-138 is the Gly-cisPro motif, important for rejection of L-amino acids element.

It belongs to the DTD family. As to quaternary structure, homodimer.

The protein resides in the cytoplasm. The catalysed reaction is glycyl-tRNA(Ala) + H2O = tRNA(Ala) + glycine + H(+). The enzyme catalyses a D-aminoacyl-tRNA + H2O = a tRNA + a D-alpha-amino acid + H(+). Its function is as follows. An aminoacyl-tRNA editing enzyme that deacylates mischarged D-aminoacyl-tRNAs. Also deacylates mischarged glycyl-tRNA(Ala), protecting cells against glycine mischarging by AlaRS. Acts via tRNA-based rather than protein-based catalysis; rejects L-amino acids rather than detecting D-amino acids in the active site. By recycling D-aminoacyl-tRNA to D-amino acids and free tRNA molecules, this enzyme counteracts the toxicity associated with the formation of D-aminoacyl-tRNA entities in vivo and helps enforce protein L-homochirality. The protein is D-aminoacyl-tRNA deacylase of Syntrophomonas wolfei subsp. wolfei (strain DSM 2245B / Goettingen).